Here is a 558-residue protein sequence, read N- to C-terminus: Sinalpyl alcohol oxidase Nec3 (558 aa).

The N-terminal stretch at 1-28 (MATMAILQRTFSFILIFSIALHLKSLFA) is a signal peptide. FAD is bound at residue 64-65 (TA). Asparagine 76 is a glycosylation site (N-linked (GlcNAc...) asparagine). Residues 83 to 84 (ER), valine 131, serine 135, and 139 to 142 (NFGF) contribute to the FAD site. N-linked (GlcNAc...) asparagine glycosylation is present at asparagine 180. Position 247 (valine 247) interacts with FAD. N-linked (GlcNAc...) asparagine glycosylation is found at asparagine 308, asparagine 386, and asparagine 473. Residues cysteine 433 and cysteine 484 are joined by a disulfide bond. 492–493 (YH) provides a ligand contact to FAD. Histidine 493 acts as the Proton donor in catalysis. The active-site Proton acceptor is the asparagine 531. An FAD-binding site is contributed by 532-533 (PQ).

This sequence belongs to the GMC oxidoreductase family. Monomer. FAD is required as a cofactor. As to expression, confined to nectaries.

It carries out the reaction (E)-sinapyl alcohol + O2 = (E)-sinapaldehyde + H2O2. Its pathway is alkaloid biosynthesis. Its function is as follows. Involved in the production of blood-red nectar containing the alkaloid nesocodin and that serves as a visual attractant for pollinator visitation, including vertebrates such as Phelsuma geckos. The nectar is initially acidic and pale yellow, but slowly becomes alkaline before turning into red within 24 hours. Together with NEC1 and NEC2, facilitates the condensation of sinapaldehyde ((E)-3,5-dimethoxy-4-hydroxycinnamaldehyde) and proline to form nesocodin, a pigment with a stable imine bond. Catalyzes the conversion of sinapyl alcohol to sinapaldehyde. The protein is Sinalpyl alcohol oxidase Nec3 of Nesocodon mauritianus (Blue Mauritius bellflower).